The following is a 423-amino-acid chain: Protein IQ-DOMAIN 16 (423 aa).

2 IQ domains span residues 99-127 and 128-150; these read RHWAAIIIQTAFRGYLSRRALRALKGIVK and LQALVRGNNVRNQAKLTLRCIKA. Residues 231–251 are a coiled coil; that stretch reads QKKLEIAIKREKAQALALSNQ. A calmodulin-binding region spans residues 235–252; that stretch reads EIAIKREKAQALALSNQI.

It belongs to the IQD family. In terms of assembly, binds to multiple calmodulin (CaM) in the presence of Ca(2+) and CaM-like proteins.

The protein localises to the cytoplasm. It is found in the cytoskeleton. It localises to the cell membrane. Its function is as follows. May be involved in cooperative interactions with calmodulins or calmodulin-like proteins. Recruits calmodulin proteins to microtubules, thus being a potential scaffold in cellular signaling and trafficking. Regulates cell shape and elongation in aerial organs (i.e. cotyledons, leaves, and hypocotyls) probably by regulating cortical microtubules (MT) arrays orientation. May associate with nucleic acids and regulate gene expression at the transcriptional or post-transcriptional level. This Arabidopsis thaliana (Mouse-ear cress) protein is Protein IQ-DOMAIN 16.